The primary structure comprises 82 residues: Large ribosomal subunit protein uL23 (82 aa).

Belongs to the universal ribosomal protein uL23 family. Part of the 50S ribosomal subunit. Contacts protein L29.

Binds to 23S rRNA. One of the proteins that surrounds the polypeptide exit tunnel on the outside of the ribosome. In Methanosarcina barkeri (strain Fusaro / DSM 804), this protein is Large ribosomal subunit protein uL23.